Here is a 525-residue protein sequence, read N- to C-terminus: Packaging protein UL32 homolog (525 aa).

A compositionally biased stretch (polar residues) spans 1-12 (MAHKVTSANEPN). The interval 1-20 (MAHKVTSANEPNPLTGKRLS) is disordered. Zn(2+)-binding residues include C95, C98, H173, C179, C255, C256, C357, C360, H427, C434, C473, and H510. 3 zinc finger regions span residues 95–179 (CRVC…ICRC), 255–510 (CCHL…LRIH), and 357–434 (CPLC…DPLC).

It belongs to the herpesviridae UL32 protein family.

The protein localises to the host cytoplasm. It is found in the host nucleus. In terms of biological role, plays a role in efficient localization of neo-synthesized capsids to nuclear replication compartments, thereby controlling cleavage and packaging of virus genomic DNA. The polypeptide is Packaging protein UL32 homolog (Epstein-Barr virus (strain B95-8) (HHV-4)).